Reading from the N-terminus, the 161-residue chain is MPSFDVVSEANMIEVKNAVEQSNKEISTRFDFKGSDARVEQKERELTLYADDDFKLGQVKDVLIGKLAKRNVDVRFLDYGKIEKIGGDKVKQVATIKKGVSGDLAKKVVRIVKDSKIKVQASIQGDAVRVSGAKRDDLQSVIALLRKEVTDTPLDFNNFRD.

The protein belongs to the YajQ family.

Its function is as follows. Nucleotide-binding protein. This chain is Nucleotide-binding protein BTH_I0730, found in Burkholderia thailandensis (strain ATCC 700388 / DSM 13276 / CCUG 48851 / CIP 106301 / E264).